The chain runs to 259 residues: Glutamate racemase (259 aa).

Residues 7 to 8 (DS) and 39 to 40 (YG) contribute to the substrate site. The Proton donor/acceptor role is filled by Cys70. Position 71–72 (71–72 (NS)) interacts with substrate. Cys180 (proton donor/acceptor) is an active-site residue. A substrate-binding site is contributed by 181 to 182 (TH).

The protein belongs to the aspartate/glutamate racemases family.

It catalyses the reaction L-glutamate = D-glutamate. It functions in the pathway cell wall biogenesis; peptidoglycan biosynthesis. Functionally, provides the (R)-glutamate required for cell wall biosynthesis. This Hydrogenobaculum sp. (strain Y04AAS1) protein is Glutamate racemase.